The following is an 842-amino-acid chain: Serine/threonine-protein kinase CLA4 (842 aa).

The tract at residues 12-34 (DNDFQNIGPAPRPPSSNSQGRTC) is disordered. Residues Ser29 and Ser46 each carry the phosphoserine modification. Residues 61 to 179 (SKKKSGWVSY…WLDAIFAKCP (119 aa)) form the PH domain. Residues 184 to 197 (VSSPTNFTHKVHVG) enclose the CRIB domain. Residues 247 to 274 (GNPTNTLDKPQSGETSSSQKSLPNSYND) are compositionally biased toward polar residues. Residues 247 to 524 (GNPTNTLDKP…KPKKPARPTM (278 aa)) are disordered. Positions 279 to 296 (NNSVNSKSSSGVSSSMVS) are enriched in low complexity. Polar residues predominate over residues 297-307 (QRKTSQPPNTK). Residues 308–319 (SPVSLGSGSLPP) show a composition bias toward low complexity. The span at 323 to 343 (KLPTSQSNIPRHLQNVPNQQY) shows a compositional bias: polar residues. 2 positions are modified to phosphoserine: Ser351 and Ser367. Positions 372–387 (QQQQQQQQQQKQQHQQ) are enriched in low complexity. A compositionally biased stretch (pro residues) spans 396-408 (SPSPSPSPSPLNP). A compositionally biased stretch (low complexity) spans 418-435 (PYSKQPQSPLSSQSTQNQ). Ser425 is modified (phosphoserine). Polar residues-rich tracts occupy residues 470 to 481 (PSNQNATSNTHV) and 488 to 497 (NDQSTPQTMR). In terms of domain architecture, Protein kinase spans 546–825 (FKVIEKAGQG…TEELLHHGFF (280 aa)). ATP is bound by residues 552–560 (AGQGASGSV) and Lys594. The active-site Proton acceptor is Asp693.

The protein belongs to the protein kinase superfamily. STE Ser/Thr protein kinase family. STE20 subfamily. Interacts with CDC42.

It catalyses the reaction L-seryl-[protein] + ATP = O-phospho-L-seryl-[protein] + ADP + H(+). It carries out the reaction L-threonyl-[protein] + ATP = O-phospho-L-threonyl-[protein] + ADP + H(+). Functionally, involved in budding and cytokinesis. The chain is Serine/threonine-protein kinase CLA4 (CLA4) from Saccharomyces cerevisiae (strain ATCC 204508 / S288c) (Baker's yeast).